A 209-amino-acid chain; its full sequence is uncharacterized protein (209 aa).

The region spanning 1–167 is the Nudix hydrolase domain; that stretch reads MRNSAGLFMI…LNTYASSNYG (167 aa).

This is an uncharacterized protein from Orgyia pseudotsugata (Douglas-fir tussock moth).